Here is a 315-residue protein sequence, read N- to C-terminus: Methionyl-tRNA formyltransferase (315 aa).

(6S)-5,6,7,8-tetrahydrofolate is bound at residue 110–113; it reads SLLP.

Belongs to the Fmt family.

It catalyses the reaction L-methionyl-tRNA(fMet) + (6R)-10-formyltetrahydrofolate = N-formyl-L-methionyl-tRNA(fMet) + (6S)-5,6,7,8-tetrahydrofolate + H(+). In terms of biological role, attaches a formyl group to the free amino group of methionyl-tRNA(fMet). The formyl group appears to play a dual role in the initiator identity of N-formylmethionyl-tRNA by promoting its recognition by IF2 and preventing the misappropriation of this tRNA by the elongation apparatus. In Lactobacillus delbrueckii subsp. bulgaricus (strain ATCC BAA-365 / Lb-18), this protein is Methionyl-tRNA formyltransferase.